A 400-amino-acid chain; its full sequence is Nicotinate phosphoribosyltransferase (400 aa).

His220 carries the phosphohistidine; by autocatalysis modification.

It belongs to the NAPRTase family. In terms of processing, transiently phosphorylated on a His residue during the reaction cycle. Phosphorylation strongly increases the affinity for substrates and increases the rate of nicotinate D-ribonucleotide production. Dephosphorylation regenerates the low-affinity form of the enzyme, leading to product release.

It catalyses the reaction nicotinate + 5-phospho-alpha-D-ribose 1-diphosphate + ATP + H2O = nicotinate beta-D-ribonucleotide + ADP + phosphate + diphosphate. It participates in cofactor biosynthesis; NAD(+) biosynthesis; nicotinate D-ribonucleotide from nicotinate: step 1/1. Its function is as follows. Catalyzes the synthesis of beta-nicotinate D-ribonucleotide from nicotinate and 5-phospho-D-ribose 1-phosphate at the expense of ATP. The polypeptide is Nicotinate phosphoribosyltransferase (Shigella dysenteriae serotype 1 (strain Sd197)).